Consider the following 338-residue polypeptide: Alanine racemase (338 aa).

K33 functions as the Proton acceptor; specific for D-alanine in the catalytic mechanism. N6-(pyridoxal phosphate)lysine is present on K33. R126 serves as a coordination point for substrate. Residue Y236 is the Proton acceptor; specific for L-alanine of the active site. M284 contributes to the substrate binding site.

The protein belongs to the alanine racemase family. Pyridoxal 5'-phosphate is required as a cofactor.

The catalysed reaction is L-alanine = D-alanine. It participates in amino-acid biosynthesis; D-alanine biosynthesis; D-alanine from L-alanine: step 1/1. Its function is as follows. Catalyzes the interconversion of L-alanine and D-alanine. May also act on other amino acids. This Aquifex aeolicus (strain VF5) protein is Alanine racemase (alr).